A 257-amino-acid polypeptide reads, in one-letter code: 5-oxoprolinase subunit A (257 aa).

Belongs to the LamB/PxpA family. Forms a complex composed of PxpA, PxpB and PxpC.

It carries out the reaction 5-oxo-L-proline + ATP + 2 H2O = L-glutamate + ADP + phosphate + H(+). In terms of biological role, catalyzes the cleavage of 5-oxoproline to form L-glutamate coupled to the hydrolysis of ATP to ADP and inorganic phosphate. The polypeptide is 5-oxoprolinase subunit A (Bacillus subtilis (strain 168)).